Reading from the N-terminus, the 280-residue chain is Ribosomal RNA small subunit methyltransferase A (280 aa).

Residues His15, Leu17, Gly42, Glu64, Asp89, and Asn109 each coordinate S-adenosyl-L-methionine.

The protein belongs to the class I-like SAM-binding methyltransferase superfamily. rRNA adenine N(6)-methyltransferase family. RsmA subfamily.

It is found in the cytoplasm. The enzyme catalyses adenosine(1518)/adenosine(1519) in 16S rRNA + 4 S-adenosyl-L-methionine = N(6)-dimethyladenosine(1518)/N(6)-dimethyladenosine(1519) in 16S rRNA + 4 S-adenosyl-L-homocysteine + 4 H(+). Functionally, specifically dimethylates two adjacent adenosines (A1518 and A1519) in the loop of a conserved hairpin near the 3'-end of 16S rRNA in the 30S particle. May play a critical role in biogenesis of 30S subunits. The chain is Ribosomal RNA small subunit methyltransferase A from Prochlorococcus marinus (strain MIT 9303).